The primary structure comprises 176 residues: Probable RNA-binding protein EIF1AD (176 aa).

An S1-like domain is found at 5–89 (TKKRYITNKV…VKGEIEYILD (85 aa)). The segment covering 117–128 (AKRGKANDKMID) has biased composition (basic and acidic residues). Residues 117-176 (AKRGKANDKMIDDDMLPPSESEEEDDESEDEIEDTYDEDEETDDEEFDTYNPNRMQAPSK) are disordered. Positions 129–164 (DDMLPPSESEEEDDESEDEIEDTYDEDEETDDEEFD) are enriched in acidic residues. The span at 166-176 (YNPNRMQAPSK) shows a compositional bias: polar residues.

It belongs to the EIF1AD family.

The protein is Probable RNA-binding protein EIF1AD of Caenorhabditis briggsae.